The following is a 354-amino-acid chain: Tsukushi (354 aa).

Positions 1-17 (MLCSLFLLLLAVGRVQT) are cleaved as a signal peptide. The region spanning 18–59 (TRPCFPGCQCEEETFGLFDSFSLIRVDCSSLGPHIVPVPIPL) is the LRRNT domain. 10 LRR repeats span residues 60-81 (DTAHLDLSSNRLETVNESVLAG), 86-107 (TLAGLDLSYNLLTSIMPSAFSR), 110-131 (YLESLDLSHNGLAALPAEIFTS), 133-154 (PLSDINLSHNRLREVSISAFTT), 160-180 (ALHVDLSHNLIHRLLPHPARA), 186-207 (TIQSLNLSWNRFRAVPDLRDLP), 208-228 (LRYLSLDGNPLATINPDAFMG), 231-253 (GLTHLSLASLQGILHLPPHGFRE), 256-277 (GLQVLDLSGNPKLKWAGAEVFS), and 281-302 (LLQELDLSGSSLVPLPEMLLHH). The N-linked (GlcNAc...) asparagine glycan is linked to Asn75. A glycan (N-linked (GlcNAc...) asparagine) is linked at Asn138. N-linked (GlcNAc...) asparagine glycosylation is present at Asn191.

Interacts with FZD4 (via FZ domain); competes with WNT2B for binding to FZD4, inhibiting Wnt signaling and repressing peripheral eye development. Interacts with TGFB1; the interaction contributes to regulation of the hair cycle. Interacts with netrin. Interacts with CCN2. Expressed in macrophages in inflamed wounds with wound expression starting 2 days post-wounding (dpw) (at protein level). At 7 dpw, expressed from epidermis and extracellular matrix in the wound edge to neoepidermis and granulation tissue and in panniculus carnosus under the granulation tissue (at protein level). After fibrosis, disappears in the dermal area at 11 dpw (at protein level). Expressed in the hair follicle during morphogenesis and the hair cycle (at protein level). In embryonic brain, strong expression in the olfactory bulb, anterior olfactory nucleus, neocortex, piriform cortex, glial wedge, midline zipper glia, indusium griseum and the area surrounding the anterior commissure (AC) but not on AC axons (at protein level). In the adult eye, expressed in retinal layers, lens epithelium, and ciliary body where it is expressed predominantly in the inner non-pigmented layer. Expressed in almost all brain regions in the embryo, in the cortex and the lateral ventricle at P0 and is restricted to the subventricular zone and lateral nucleus of the amygdala in adults. Prominent expression in hippocampal regions from early postnatal stages until postnatal day 15 and gradually declines at later stages. Expressed in almost all bone regions in the femurs of juveniles. In the inner ear, accumulates in nonprosensory regions during early embryonic stages and in both nonprosensory and prosensory regions in late embryonic stages. In the adult ear, expressed in the organ of Corti, spiral ganglion cells, and the stria vascularis. Highly expressed in the liver where it is detected primarily in hepatocytes but not in non-parenchymal cells.

The protein localises to the secreted. Contributes to various developmental events and other processes such as wound healing and cholesterol homeostasis through its interactions with multiple signaling pathways. Wnt signaling inhibitor which competes with WNT2B for binding to Wnt receptor FZD4 and represses WNT2B-dependent development of the peripheral eye. Plays a role in regulating the hair cycle by controlling TGFB1 signaling. Required for the development of the anterior commissure in the brain by inhibiting neurite outgrowth. Essential for terminal differentiation of hippocampal neural stem cells. Plays a role in regulating bone elongation and bone mass by modulating growth plate chondrocyte function and overall body size. Required for development of the inner ear through its involvement in stereocilia formation in inner hair cells. Facilitates wound healing by inhibiting secretion of TGFB1 from macrophages which prevents myofibroblast differentiation, maintaining inflammatory cell quiescence. Plays a role in cholesterol homeostasis by reducing circulating high-density lipoprotein cholesterol, lowering cholesterol efflux capacity and decreasing cholesterol-to-bile acid conversion in the liver. In one study, shown to negatively regulate sympathetic innervation in brown fat, leading to reduced energy expenditure. In another study, shown not to affect brown fat thermogenic capacity, body weight gain or glucose homeostasis. This Mus musculus (Mouse) protein is Tsukushi.